Reading from the N-terminus, the 66-residue chain is MLCLPVFIILLLLASPAASNPLEKRIQSDLIRAALEDADTKNDPRLLDYVTGACCAGLNFVCCGKK.

The signal sequence occupies residues 1–19; sequence MLCLPVFIILLLLASPAAS. The propeptide occupies 20–45; the sequence is NPLEKRIQSDLIRAALEDADTKNDPR. Position 63 is a cysteine amide (Cys63).

Belongs to the conotoxin T superfamily. In terms of processing, contains 2 disulfide bonds that can be either 'C1-C3, C2-C4' or 'C1-C4, C2-C3', since these disulfide connectivities have been observed for conotoxins with cysteine framework V (for examples, see AC P0DQQ7 and AC P81755). Expressed by the venom duct.

Its subcellular location is the secreted. The protein is Conotoxin PnMLCL-01 of Conus pennaceus (Feathered cone).